A 588-amino-acid polypeptide reads, in one-letter code: Oxidoreductase NdmD (588 aa).

A Rieske domain is found at 9 to 114 (WFPIATTEDL…VREKHGFIWT (106 aa)). Residues C50, H52, C69, and H72 each contribute to the [2Fe-2S] cluster site. One can recognise an FAD-binding FR-type domain in the interval 272 to 373 (PTHYICEVVT…TLPRNGFPLV (102 aa)). A 2Fe-2S ferredoxin-type domain is found at 503 to 588 (YEVELKKTGQ…CKSKKIVLDL (86 aa)). Residues C537, C542, C545, and C575 each contribute to the [2Fe-2S] cluster site.

Requires [2Fe-2S] cluster as cofactor.

Involved in the caffeine degradation, which is the essential first step for assimilating the carbon and nitrogen in caffeine. Catalyzes the oxidation of NADH and transfers electrons to NdmA and NdmB, which catalyze the N-demethylation reactions. This chain is Oxidoreductase NdmD (ndmD), found in Pseudomonas putida (Arthrobacter siderocapsulatus).